Here is a 141-residue protein sequence, read N- to C-terminus: Nucleoside diphosphate kinase (141 aa).

6 residues coordinate ATP: Lys11, Phe59, Arg87, Thr93, Arg104, and Asn114. The active-site Pros-phosphohistidine intermediate is the His117.

Belongs to the NDK family. In terms of assembly, homotetramer. It depends on Mg(2+) as a cofactor.

The protein localises to the cytoplasm. It carries out the reaction a 2'-deoxyribonucleoside 5'-diphosphate + ATP = a 2'-deoxyribonucleoside 5'-triphosphate + ADP. The enzyme catalyses a ribonucleoside 5'-diphosphate + ATP = a ribonucleoside 5'-triphosphate + ADP. In terms of biological role, major role in the synthesis of nucleoside triphosphates other than ATP. The ATP gamma phosphate is transferred to the NDP beta phosphate via a ping-pong mechanism, using a phosphorylated active-site intermediate. This chain is Nucleoside diphosphate kinase, found in Burkholderia thailandensis (strain ATCC 700388 / DSM 13276 / CCUG 48851 / CIP 106301 / E264).